A 172-amino-acid chain; its full sequence is Small t antigen (172 aa).

An N-acetylmethionine; by host modification is found at Met1. One can recognise a J domain in the interval 12–75 (ELMDLLGLDR…VKVAHQPDFG (64 aa)). Residues 101–114 (CATNPSVHCPCLMC) form a C4-type; atypical zinc finger. The H1C3-type; atypical zinc finger occupies 120 to 141 (HRNRKFLRSSPLVWIDCYCFDC).

In terms of assembly, interacts with host PPP2R1A; the interaction inhibits PP2A activity. Interacts with agnoprotein; this interaction prevents agnoprotein dephosphorylation by host PP2A. Interacts with host RBL1 and RBL2. Interacts with SMARCA5. Interacts with SDHB.

Its subcellular location is the host cytoplasm. It is found in the host nucleus. Promotes efficient viral genome replication by modulating several host signaling pathways including transport network, interferon production or cell cycle progression. Inhibits host PP2A phosphatase activity and thereby prevents agnoprotein dephosphorylation. Inactivation of PP2A also results in the transactivation of cyclin A and cyclin D1 promoters. In addition, antagonizes the RIGI-mediated IFN response through interaction with E3 ligase TRIM25 leading to the inhibition of 'Lys-63'-linked ubiquitination of RIGI. Inhibits nucleotide excision repair (NER) pathway which leads to DNA strand breaks during DNA replication and micronuclei formation. This is Small t antigen from JC polyomavirus (JCPyV).